Reading from the N-terminus, the 293-residue chain is Nucleotide-binding protein cauri_1197 (293 aa).

ATP is bound at residue Gly16 to Thr23. Asp67 to Ser70 serves as a coordination point for GTP.

Belongs to the RapZ-like family.

Functionally, displays ATPase and GTPase activities. This is Nucleotide-binding protein cauri_1197 from Corynebacterium aurimucosum (strain ATCC 700975 / DSM 44827 / CIP 107346 / CN-1) (Corynebacterium nigricans).